Here is a 376-residue protein sequence, read N- to C-terminus: Erythronate-4-phosphate dehydrogenase (376 aa).

Residues serine 45 and threonine 67 each contribute to the substrate site. Aspartate 147 contributes to the NAD(+) binding site. Arginine 209 is a catalytic residue. Aspartate 233 serves as a coordination point for NAD(+). Glutamate 238 is an active-site residue. Residue histidine 255 is the Proton donor of the active site. Glycine 258 is an NAD(+) binding site. A substrate-binding site is contributed by tyrosine 259.

Belongs to the D-isomer specific 2-hydroxyacid dehydrogenase family. PdxB subfamily. As to quaternary structure, homodimer.

Its subcellular location is the cytoplasm. The catalysed reaction is 4-phospho-D-erythronate + NAD(+) = (R)-3-hydroxy-2-oxo-4-phosphooxybutanoate + NADH + H(+). Its pathway is cofactor biosynthesis; pyridoxine 5'-phosphate biosynthesis; pyridoxine 5'-phosphate from D-erythrose 4-phosphate: step 2/5. In terms of biological role, catalyzes the oxidation of erythronate-4-phosphate to 3-hydroxy-2-oxo-4-phosphonooxybutanoate. This is Erythronate-4-phosphate dehydrogenase from Shewanella baltica (strain OS185).